The primary structure comprises 535 residues: uncharacterized protein (535 aa).

A run of 6 helical transmembrane segments spans residues 63–83, 90–110, 143–163, 168–188, 226–246, and 258–278; these read LTGIVVALLVVTFAFPVPSIY, VTFGVAPAYATLALAIGTYWI, VAAVHLILWDIGGALLATLYG, VFVTIILFSVTICGVLVATNC, SLGSGVPVTGIATTALYVLLV, and VLILSITTLIFGFLVMWILAW. An HAMP domain is found at 279–330; that stretch reads LTAAPVRVVRAALKRVEQGDLRGDLVVFDGTELGELQRGFNAMVNGLRERER. Positions 362–486 constitute a Guanylate cyclase domain; sequence AVVFVDIVGS…KPVNQAARLC (125 aa).

The protein belongs to the adenylyl cyclase class-3 family.

The protein resides in the cell membrane. This is an uncharacterized protein from Mycobacterium tuberculosis (strain ATCC 25618 / H37Rv).